Here is a 362-residue protein sequence, read N- to C-terminus: Histidinol-phosphate aminotransferase (362 aa).

Lys210 carries the N6-(pyridoxal phosphate)lysine modification.

This sequence belongs to the class-II pyridoxal-phosphate-dependent aminotransferase family. Histidinol-phosphate aminotransferase subfamily. Homodimer. Requires pyridoxal 5'-phosphate as cofactor.

The catalysed reaction is L-histidinol phosphate + 2-oxoglutarate = 3-(imidazol-4-yl)-2-oxopropyl phosphate + L-glutamate. It participates in amino-acid biosynthesis; L-histidine biosynthesis; L-histidine from 5-phospho-alpha-D-ribose 1-diphosphate: step 7/9. The chain is Histidinol-phosphate aminotransferase from Rhodopirellula baltica (strain DSM 10527 / NCIMB 13988 / SH1).